A 383-amino-acid chain; its full sequence is Opsin Rh3 (383 aa).

Residues 1 to 57 (MESGNVSSSLFGNVSTALRPEARLSAETRLLGWNVPPEELRHIPEHWLTYPEPPESM) lie on the Extracellular side of the membrane. N13 is a glycosylation site (N-linked (GlcNAc...) asparagine). The helical transmembrane segment at 58-82 (NYLLGTLYIFFTLMSMLGNGLVIWV) threads the bilayer. Residues 83-94 (FSAAKSLRTPSN) lie on the Cytoplasmic side of the membrane. The helical transmembrane segment at 95-119 (ILVINLAFCDFMMMVKTPIFIYNSF) threads the bilayer. Residues 120-133 (HQGYALGHLGCQIF) are Extracellular-facing. A disulfide bridge links C130 with C207. The chain crosses the membrane as a helical span at residues 134–153 (GIIGSYTGIAAGATNAFIAY). Residues 154–171 (DRFNVITRPMEGKMTHGK) are Cytoplasmic-facing. Residues 172–196 (AIAMIIFIYMYATPWVVACYTETWG) form a helical membrane-spanning segment. Residues 197 to 220 (RFVPEGYLTSCTFDYLTDNFDTRL) are Extracellular-facing. Residues 221–248 (FVACIFFFSFVCPTTMITYYYSQIVGHV) form a helical membrane-spanning segment. Residues 249-284 (FSHEKALRDQAKKMNVESLRSNVDKNKETAEIRIAK) are Cytoplasmic-facing. The helical transmembrane segment at 285–308 (AAITICFLFFCSWTPYGVMSLIGA) threads the bilayer. The Extracellular portion of the chain corresponds to 309-316 (FGDKTLLT). Residues 317–341 (PGATMIPACACKMVACIDPFVYAIS) traverse the membrane as a helical segment. The residue at position 328 (K328) is an N6-(retinylidene)lysine. Residues 342–383 (HPRYRMELQKRCPWLALNEKAPESSAVASTSTTQEPQQTTAA) lie on the Cytoplasmic side of the membrane. Residues 362–383 (APESSAVASTSTTQEPQQTTAA) are disordered. A compositionally biased stretch (low complexity) spans 369–383 (ASTSTTQEPQQTTAA).

It belongs to the G-protein coupled receptor 1 family. Opsin subfamily. Phosphorylated on some or all of the serine and threonine residues present in the C-terminal region.

The protein localises to the membrane. Its function is as follows. Visual pigments are the light-absorbing molecules that mediate vision. They consist of an apoprotein, opsin, covalently linked to cis-retinal. The polypeptide is Opsin Rh3 (Rh3) (Drosophila melanogaster (Fruit fly)).